Consider the following 340-residue polypeptide: Phosphoribosylformylglycinamidine cyclo-ligase (340 aa).

This sequence belongs to the AIR synthase family.

It is found in the cytoplasm. It catalyses the reaction 2-formamido-N(1)-(5-O-phospho-beta-D-ribosyl)acetamidine + ATP = 5-amino-1-(5-phospho-beta-D-ribosyl)imidazole + ADP + phosphate + H(+). It participates in purine metabolism; IMP biosynthesis via de novo pathway; 5-amino-1-(5-phospho-D-ribosyl)imidazole from N(2)-formyl-N(1)-(5-phospho-D-ribosyl)glycinamide: step 2/2. This chain is Phosphoribosylformylglycinamidine cyclo-ligase, found in Streptococcus pyogenes serotype M6 (strain ATCC BAA-946 / MGAS10394).